The primary structure comprises 59 residues: UPF0434 protein HEAR2489 (59 aa).

The protein belongs to the UPF0434 family.

The protein is UPF0434 protein HEAR2489 of Herminiimonas arsenicoxydans.